Here is a 250-residue protein sequence, read N- to C-terminus: MFIFKRKKQVEMPLEKIPAHIGIIMDGNGRWAKKRLKPRVMGHKAGMDALQEVTIAASGLGVKVLTVYAFSTENWSRPDDEVKFIMNLPVEFFDKYVPELDKNNVRVQVIGDTHKLPKATYDAMQRACLRTKHNSGLVLNFALNYGGRSEITNAIKEIAQDVLEAKLNPDDITEDLVANHLMTNSLPYLYRDPDLIIRTSGELRLSNFLPWQSAYSEFYFTPVLWPDFKKDELHKAIVDYNQRHRRFGSV.

D26 is an active-site residue. D26 is a binding site for Mg(2+). Residues 27–30 (GNGR), W31, R39, H43, and 71–73 (STE) each bind substrate. Catalysis depends on N74, which acts as the Proton acceptor. Residues W75, R77, R198, and 204–206 (RLS) each bind substrate. E217 lines the Mg(2+) pocket.

This sequence belongs to the UPP synthase family. As to quaternary structure, homodimer. Mg(2+) is required as a cofactor.

In terms of biological role, catalyzes the condensation of isopentenyl diphosphate (IPP) with allylic pyrophosphates generating different type of terpenoids. The sequence is that of Isoprenyl transferase from Streptococcus agalactiae serotype III (strain NEM316).